Reading from the N-terminus, the 296-residue chain is Morphine 6-dehydrogenase (296 aa).

Position 13–22 (13–22 (GVKMPALGLG)) interacts with NADP(+). Tyr-52 serves as the catalytic Proton donor. His-110 is a binding site for substrate.

This sequence belongs to the aldo/keto reductase family. As to quaternary structure, monomer.

It catalyses the reaction morphine + NAD(+) = morphinone + NADH + H(+). The catalysed reaction is morphine + NADP(+) = morphinone + NADPH + H(+). Its pathway is alkaloid degradation; codeine degradation. The protein operates within alkaloid degradation; morphine degradation. In terms of biological role, oxidizes only the C-6 hydroxy group of morphine and codeine. The chain is Morphine 6-dehydrogenase (morA) from Pseudomonas putida (Arthrobacter siderocapsulatus).